The chain runs to 405 residues: Argininosuccinate synthase (405 aa).

ATP-binding positions include 10-18 (AYSGGLDTS) and alanine 37. 2 residues coordinate L-citrulline: tyrosine 88 and serine 93. Glycine 118 lines the ATP pocket. L-aspartate contacts are provided by threonine 120, asparagine 124, and aspartate 125. L-citrulline is bound at residue asparagine 124. L-citrulline-binding residues include arginine 128, serine 179, serine 188, glutamate 264, and tyrosine 276.

It belongs to the argininosuccinate synthase family. Type 1 subfamily. As to quaternary structure, homotetramer.

The protein resides in the cytoplasm. The enzyme catalyses L-citrulline + L-aspartate + ATP = 2-(N(omega)-L-arginino)succinate + AMP + diphosphate + H(+). It functions in the pathway amino-acid biosynthesis; L-arginine biosynthesis; L-arginine from L-ornithine and carbamoyl phosphate: step 2/3. The sequence is that of Argininosuccinate synthase from Pseudomonas fluorescens (strain Pf0-1).